The chain runs to 107 residues: Thioredoxin (107 aa).

Positions 2–107 (SVSQVTDASF…LESTLNKYIS (106 aa)) constitute a Thioredoxin domain. Residues Cys-31 and Cys-34 each act as nucleophile in the active site. Cys-31 and Cys-34 are disulfide-bonded.

This sequence belongs to the thioredoxin family.

Its subcellular location is the plastid. It is found in the chloroplast. In terms of biological role, participates in various redox reactions through the reversible oxidation of its active center dithiol to a disulfide and catalyzes dithiol-disulfide exchange reactions. This is Thioredoxin (trxA) from Porphyra purpurea (Red seaweed).